A 464-amino-acid chain; its full sequence is Properdin (464 aa).

The signal sequence occupies residues 1–22; that stretch reads MPAEMQAPQWLLLLLVILPATG. TSP type-1 domains follow at residues 24–72, 73–130, 132–187, 189–251, 253–309, 311–372, and 374–457; these read DPVL…QACR, SPQW…PCCP, MGGW…KTCP, HGAW…PPCP, AGGW…VPCP, NGEW…HNCI, and KGSW…PVCK. 3 disulfides stabilise this stretch: cysteine 28–cysteine 52, cysteine 39–cysteine 68, and cysteine 53–cysteine 71. 2 C-linked (Man) tryptophan glycosylation sites follow: tryptophan 79 and tryptophan 82. Intrachain disulfides connect cysteine 85–cysteine 123, cysteine 89–cysteine 129, cysteine 100–cysteine 107, cysteine 128–cysteine 166, cysteine 144–cysteine 180, cysteine 148–cysteine 186, and cysteine 159–cysteine 170. Residues tryptophan 135, tryptophan 138, and tryptophan 141 are each glycosylated (C-linked (Man) tryptophan). A glycan (O-linked (Fuc...) threonine) is linked at threonine 147. Tryptophan 192, tryptophan 195, and tryptophan 198 each carry a C-linked (Man) tryptophan glycan. 3 cysteine pairs are disulfide-bonded: cysteine 201/cysteine 244, cysteine 205/cysteine 250, and cysteine 220/cysteine 234. O-linked (Fuc...) serine glycosylation is present at serine 204. Residues tryptophan 256 and tryptophan 259 are each glycosylated (C-linked (Man) tryptophan). 3 cysteine pairs are disulfide-bonded: cysteine 265/cysteine 302, cysteine 269/cysteine 308, and cysteine 280/cysteine 292. The O-linked (Fuc...) threonine glycan is linked to threonine 268. Residues tryptophan 317 and tryptophan 320 are each glycosylated (C-linked (Man) tryptophan). 3 disulfides stabilise this stretch: cysteine 323–cysteine 365, cysteine 332–cysteine 371, and cysteine 345–cysteine 355. The interval 346–354 is interaction with Complement C3 beta chain; the sequence is GGRKFNGKP. Residues tryptophan 377, tryptophan 380, and tryptophan 383 are each glycosylated (C-linked (Man) tryptophan). Cystine bridges form between cysteine 386–cysteine 450, cysteine 390–cysteine 456, and cysteine 402–cysteine 434. Asparagine 423 is a glycosylation site (N-linked (GlcNAc...) asparagine).

In plasma, properdin exists as dimers, trimers or tetramers in the relative proportions of 26:54:20. Interacts with the pro-C3-convertase enzyme complex (C3b-Bb) comprised of Complement C3 beta chain (C3b) and the Complement factor B Bb fragment (Bb), where it binds (via its TSP type-1 5 domain) with C3b and Bb. This interaction stabilizes the complex and allows it to become the active C3-convertase enzyme complex (C3b-Bb-FP). Interacts with C3b. Interacts with CFB.

The protein localises to the secreted. Its function is as follows. A positive regulator of the alternate pathway of complement. It binds to and stabilizes the C3- and C5-convertase enzyme complexes. Inhibits CFI-CFH mediated degradation of Inhibits CFI-CFH mediated degradation of Complement C3 beta chain (C3b). The polypeptide is Properdin (Cfp) (Mus musculus (Mouse)).